The sequence spans 691 residues: Protein-glutamine gamma-glutamyltransferase E (691 aa).

Residue Tyr110 is modified to Phosphotyrosine. Thr111 carries the post-translational modification Phosphothreonine. Residues Ala221, Asn224, Asn226, and Asp227 each coordinate Ca(2+). Cys272 is an active-site residue. Ca(2+)-binding residues include Asp301, Asp303, Asn305, Ser307, and Asp324. Residues His330 and Asp353 contribute to the active site. Asn393, Thr414, Glu442, and Glu447 together coordinate Ca(2+).

Belongs to the transglutaminase superfamily. Transglutaminase family. As to quaternary structure, consists of two polypeptide chains, which are synthesized as a precursor form of a single polypeptide. It depends on Ca(2+) as a cofactor. Activated by proteolytic processing. In vitro activation is commonly achieved by cleavage with dispase, a neutral bacterial protease. Physiological activation may be catalyzed by CTSL and, to a lesser extent, by CTSS.

Its subcellular location is the cytoplasm. The enzyme catalyses L-glutaminyl-[protein] + L-lysyl-[protein] = [protein]-L-lysyl-N(6)-5-L-glutamyl-[protein] + NH4(+). Catalyzes the calcium-dependent formation of isopeptide cross-links between glutamine and lysine residues in various proteins, as well as the conjugation of polyamines to proteins. Involved in the formation of the cornified envelope (CE), a specialized component consisting of covalent cross-links of proteins beneath the plasma membrane of terminally differentiated keratinocytes. Catalyzes small proline-rich proteins and LOR cross-linking to form small interchain oligomers, which are further cross-linked by TGM1 onto the growing CE scaffold. In hair follicles, involved in cross-linking structural proteins to hardening the inner root sheath. This Bos taurus (Bovine) protein is Protein-glutamine gamma-glutamyltransferase E (TGM3).